The chain runs to 396 residues: 1-deoxy-D-xylulose 5-phosphate reductoisomerase (396 aa).

NADPH contacts are provided by Thr-13, Gly-14, Ser-15, Ile-16, and Asn-127. Lys-128 is a 1-deoxy-D-xylulose 5-phosphate binding site. Glu-129 serves as a coordination point for NADPH. Residue Asp-153 coordinates Mn(2+). 4 residues coordinate 1-deoxy-D-xylulose 5-phosphate: Ser-154, Glu-155, Ser-184, and His-207. Glu-155 contributes to the Mn(2+) binding site. Gly-213 is a binding site for NADPH. 1-deoxy-D-xylulose 5-phosphate contacts are provided by Ser-220, Asn-225, Lys-226, and Glu-229. Glu-229 contributes to the Mn(2+) binding site.

This sequence belongs to the DXR family. Requires Mg(2+) as cofactor. The cofactor is Mn(2+).

The catalysed reaction is 2-C-methyl-D-erythritol 4-phosphate + NADP(+) = 1-deoxy-D-xylulose 5-phosphate + NADPH + H(+). The protein operates within isoprenoid biosynthesis; isopentenyl diphosphate biosynthesis via DXP pathway; isopentenyl diphosphate from 1-deoxy-D-xylulose 5-phosphate: step 1/6. Its function is as follows. Catalyzes the NADPH-dependent rearrangement and reduction of 1-deoxy-D-xylulose-5-phosphate (DXP) to 2-C-methyl-D-erythritol 4-phosphate (MEP). In Pseudomonas syringae pv. tomato (strain ATCC BAA-871 / DC3000), this protein is 1-deoxy-D-xylulose 5-phosphate reductoisomerase.